A 267-amino-acid chain; its full sequence is NAD kinase 2 (267 aa).

The active-site Proton acceptor is Asp-52. NAD(+)-binding positions include 52 to 53 (DG), 124 to 125 (NE), Arg-151, Asp-153, 164 to 169 (TGYNKS), and Ala-188.

Belongs to the NAD kinase family. A divalent metal cation serves as cofactor.

It is found in the cytoplasm. It catalyses the reaction NAD(+) + ATP = ADP + NADP(+) + H(+). Its function is as follows. Involved in the regulation of the intracellular balance of NAD and NADP, and is a key enzyme in the biosynthesis of NADP. Catalyzes specifically the phosphorylation on 2'-hydroxyl of the adenosine moiety of NAD to yield NADP. In Geobacillus kaustophilus (strain HTA426), this protein is NAD kinase 2.